A 383-amino-acid polypeptide reads, in one-letter code: Na(+)/H(+) antiporter NhaA (383 aa).

11 consecutive transmembrane segments (helical) span residues 10–30 (LIGG…NNSP), 56–76 (LMHW…GLEI), 91–111 (IITP…IYLS), 121–141 (GWAI…ALLG), 150–170 (LLVI…IAIF), 174–194 (SLSL…IICN), 206–226 (VVLG…ATLA), 254–274 (PWII…ISFS), 289–308 (IIWG…LAVF), 327–347 (GISL…VLAF), and 355–375 (AIKI…YIVL).

This sequence belongs to the NhaA Na(+)/H(+) (TC 2.A.33) antiporter family.

It is found in the cell inner membrane. It catalyses the reaction Na(+)(in) + 2 H(+)(out) = Na(+)(out) + 2 H(+)(in). Functionally, na(+)/H(+) antiporter that extrudes sodium in exchange for external protons. This chain is Na(+)/H(+) antiporter NhaA, found in Francisella tularensis subsp. mediasiatica (strain FSC147).